The following is a 631-amino-acid chain: Interferon-induced GTP-binding protein Mx1 (631 aa).

Residues 33-306 enclose the Dynamin-type G domain; sequence DLALPAIAVI…LTSHICKSLP (274 aa). The interval 43 to 50 is G1 motif; sequence GDQSSGKS. Residue 43–50 participates in GTP binding; it reads GDQSSGKS. Residues 68–70 form a G2 motif region; the sequence is VTR. Residues 144 to 147 are G3 motif; the sequence is DLPG. Residues 144–148 and 213–216 contribute to the GTP site; these read DLPGI and TKPD. The interval 213–216 is G4 motif; sequence TKPD. The interval 245–248 is G5 motif; that stretch reads KCRG. A bundle signaling element (BSE) region spans residues 307–332; the sequence is LLEDQINSSHQSASEELQKYGADIPE. Positions 332–499 are middle domain; the sequence is EDDRTRMSFL…HFQMEQIVYC (168 aa). Positions 333–601 are stalk; sequence DDRTRMSFLV…TSKCSWFLEE (269 aa). Positions 520–522 are critical for lipid-binding; the sequence is KTK. The GED domain maps to 543 to 631; sequence TTEMTQHLKA…ARQKLAKFSD (89 aa).

The protein belongs to the TRAFAC class dynamin-like GTPase superfamily. Dynamin/Fzo/YdjA family. As to quaternary structure, homooligomer. Oligomerizes into multimeric filamentous or ring-like structures by virtue of its stalk domain. Oligomerization is critical for GTPase activity, protein stability, and recognition of viral target structures. Interacts with TRPC1, TRPC3, TRPC4, TRPC5, TRPC6 and TRPC7. Interacts with HSPA5. Interacts with TUBB/TUBB5. Interacts with DDX39A and DDX39B. ISGylated.

The protein localises to the cytoplasm. The protein resides in the nucleus. Its subcellular location is the endoplasmic reticulum membrane. It localises to the perinuclear region. In terms of biological role, interferon-induced dynamin-like GTPase with antiviral activity against influenza A virus, (IAV), influenza B virus (IBV) and Thogoto virus (THOV). Inhibits FLUAV by interfering with the process of primary transcription, probably by affecting the viral polymerase function. This Mus musculus (Mouse) protein is Interferon-induced GTP-binding protein Mx1 (Mx1).